A 483-amino-acid chain; its full sequence is Regulatory protein ViaA (483 aa).

The protein belongs to the ViaA family. As to quaternary structure, homodimer. Interacts with RavA.

Its subcellular location is the cytoplasm. Its function is as follows. Component of the RavA-ViaA chaperone complex, which may act on the membrane to optimize the function of some of the respiratory chains. ViaA stimulates the ATPase activity of RavA. The polypeptide is Regulatory protein ViaA (Escherichia coli (strain SMS-3-5 / SECEC)).